The following is a 376-amino-acid chain: Chaperone protein DnaJ 2 (376 aa).

Positions 8–72 (DYYEILGVPR…EKRKLYDMYG (65 aa)) constitute a J domain. The CR-type zinc-finger motif lies at 143-219 (GTTVPIEVER…CTGRGYGLVK (77 aa)). Zn(2+)-binding residues include Cys156, Cys159, Cys172, Cys175, Cys194, Cys197, Cys207, and Cys210. CXXCXGXG motif repeat units follow at residues 156–163 (CSACGGTG), 172–179 (CPTCGGRG), 194–201 (CPTCGGEG), and 207–214 (CHACTGRG).

The protein belongs to the DnaJ family. Homodimer. Requires Zn(2+) as cofactor.

It localises to the cytoplasm. Its function is as follows. Participates actively in the response to hyperosmotic and heat shock by preventing the aggregation of stress-denatured proteins and by disaggregating proteins, also in an autonomous, DnaK-independent fashion. Unfolded proteins bind initially to DnaJ; upon interaction with the DnaJ-bound protein, DnaK hydrolyzes its bound ATP, resulting in the formation of a stable complex. GrpE releases ADP from DnaK; ATP binding to DnaK triggers the release of the substrate protein, thus completing the reaction cycle. Several rounds of ATP-dependent interactions between DnaJ, DnaK and GrpE are required for fully efficient folding. Also involved, together with DnaK and GrpE, in the DNA replication of plasmids through activation of initiation proteins. The chain is Chaperone protein DnaJ 2 from Aquifex aeolicus (strain VF5).